The sequence spans 175 residues: Large ribosomal subunit protein uL10 (175 aa).

The protein belongs to the universal ribosomal protein uL10 family. In terms of assembly, part of the ribosomal stalk of the 50S ribosomal subunit. The N-terminus interacts with L11 and the large rRNA to form the base of the stalk. The C-terminus forms an elongated spine to which L12 dimers bind in a sequential fashion forming a multimeric L10(L12)X complex.

Functionally, forms part of the ribosomal stalk, playing a central role in the interaction of the ribosome with GTP-bound translation factors. The polypeptide is Large ribosomal subunit protein uL10 (Synechococcus sp. (strain CC9902)).